The sequence spans 102 residues: Small ribosomal subunit protein bS18 (102 aa).

Belongs to the bacterial ribosomal protein bS18 family. In terms of assembly, part of the 30S ribosomal subunit. Forms a tight heterodimer with protein bS6.

Functionally, binds as a heterodimer with protein bS6 to the central domain of the 16S rRNA, where it helps stabilize the platform of the 30S subunit. This chain is Small ribosomal subunit protein bS18, found in Orientia tsutsugamushi (strain Ikeda) (Rickettsia tsutsugamushi).